Consider the following 78-residue polypeptide: MSEIASRVKAIIVDKLGVEESEVTNEASFTNDLGADSLDTVELIMEFEKEFGISIPDDQAEKIGTVGDAVSYIEEHAK.

Positions 2 to 77 constitute a Carrier domain; sequence SEIASRVKAI…DAVSYIEEHA (76 aa). S37 is subject to O-(pantetheine 4'-phosphoryl)serine.

Belongs to the acyl carrier protein (ACP) family. In terms of processing, 4'-phosphopantetheine is transferred from CoA to a specific serine of apo-ACP by AcpS. This modification is essential for activity because fatty acids are bound in thioester linkage to the sulfhydryl of the prosthetic group.

It localises to the cytoplasm. It functions in the pathway lipid metabolism; fatty acid biosynthesis. Its function is as follows. Carrier of the growing fatty acid chain in fatty acid biosynthesis. In Bacteroides thetaiotaomicron (strain ATCC 29148 / DSM 2079 / JCM 5827 / CCUG 10774 / NCTC 10582 / VPI-5482 / E50), this protein is Acyl carrier protein.